A 115-amino-acid polypeptide reads, in one-letter code: Large ribosomal subunit protein uL24 (115 aa).

This sequence belongs to the universal ribosomal protein uL24 family. As to quaternary structure, part of the 50S ribosomal subunit.

One of two assembly initiator proteins, it binds directly to the 5'-end of the 23S rRNA, where it nucleates assembly of the 50S subunit. Its function is as follows. One of the proteins that surrounds the polypeptide exit tunnel on the outside of the subunit. The protein is Large ribosomal subunit protein uL24 of Acaryochloris marina (strain MBIC 11017).